A 535-amino-acid chain; its full sequence is Phosphoenolpyruvate carboxykinase (ATP) (535 aa).

Substrate contacts are provided by Arg-59, Tyr-201, and Lys-207. Residues Lys-207, His-226, and 243-251 (GLSGTGKTT) contribute to the ATP site. Mn(2+) is bound by residues Lys-207 and His-226. Asp-264 contributes to the Mn(2+) binding site. ATP contacts are provided by residues Glu-292, Arg-328, 444–445 (RI), and Thr-450. Arg-328 contacts substrate.

The protein belongs to the phosphoenolpyruvate carboxykinase (ATP) family. Mn(2+) serves as cofactor.

It is found in the cytoplasm. It carries out the reaction oxaloacetate + ATP = phosphoenolpyruvate + ADP + CO2. It functions in the pathway carbohydrate biosynthesis; gluconeogenesis. Functionally, involved in the gluconeogenesis. Catalyzes the conversion of oxaloacetate (OAA) to phosphoenolpyruvate (PEP) through direct phosphoryl transfer between the nucleoside triphosphate and OAA. In Porphyromonas gingivalis (strain ATCC BAA-308 / W83), this protein is Phosphoenolpyruvate carboxykinase (ATP).